The following is a 161-amino-acid chain: MKTVVFPGSFDPVTLGHIDLITRASKLAERVVIAVAVNTSKRTLFNLNERCDLLSEATAHLSGIEVIPFSGLLADFAKEHNAQALIRGIRGTTDADYELQLAQVNKALNSELETILLPANAATGFISSTVVKEVFKHNGDIDPFAPPCVKQALLIKHSENS.

S9 provides a ligand contact to substrate. ATP-binding positions include 9 to 10 (SF) and H17. Residues K41, L73, and R87 each contribute to the substrate site. ATP is bound by residues 88–90 (GIR), E98, and 123–129 (TGFISST).

The protein belongs to the bacterial CoaD family. As to quaternary structure, homohexamer. Mg(2+) is required as a cofactor.

It is found in the cytoplasm. It carries out the reaction (R)-4'-phosphopantetheine + ATP + H(+) = 3'-dephospho-CoA + diphosphate. Its pathway is cofactor biosynthesis; coenzyme A biosynthesis; CoA from (R)-pantothenate: step 4/5. In terms of biological role, reversibly transfers an adenylyl group from ATP to 4'-phosphopantetheine, yielding dephospho-CoA (dPCoA) and pyrophosphate. The polypeptide is Phosphopantetheine adenylyltransferase (Psychromonas ingrahamii (strain DSM 17664 / CCUG 51855 / 37)).